A 772-amino-acid polypeptide reads, in one-letter code: Magnetosome formation protease MamE (772 aa).

At 1–21 (MTMFNGDVEDGGRSNVSCGKD) the chain is on the cytoplasmic side. A helical membrane pass occupies residues 22–42 (LKRYLMLMGVVALVVLFGAFI). Topologically, residues 43–772 (YRQSSGGLRL…RNGQEFWIVL (730 aa)) are lumenal. Residues H187, D220, and S296 each act as charge relay system in the active site. An MCR (magnetochrome) 1 motif is present at residues 374–397 (IAAGTPSPHVDGRQNMDCSNCHDI). Heme-binding residues include C391, C394, H395, C437, C440, H441, C488, C491, and H492. 2 short sequence motifs (MCR) span residues 420–443 (IPAN…CHQF) and 470–494 (AIRA…CHQI). The region spanning 445-558 (GGAAAGPIAF…ALTPLTQRLG (114 aa)) is the Cytochrome c domain. PDZ domains follow at residues 522-626 (AINI…LRAG) and 696-765 (GATP…HRNG).

In the N-terminal section; belongs to the peptidase S1C family. In terms of assembly, might interact with MamB via PDZ1. It depends on heme as a cofactor. In terms of processing, the protein isolated from magnetosome membranes has a molecular weight of about 36.3 kDa, probably due to C-terminal cleavage. Subject to autocatalytic cleavage; cleavage also requires MamO; these may be the same event.

Its subcellular location is the magnetosome membrane. Its function is as follows. Acts at 2 distinct steps of magnetosome formation; required for correct localization of proteins to the magnetosome while the protease activity is required for maturation of small magnetite crystals into larger, functional ones. Probably cleaves at least itself, MamO and MamP; cleavage requires the putative transprot domain of MamO. Involved in localization of some proteins (at least MamA, MamC, MamF, MamI and MamJ) to the magnetosome. One of 7 genes (mamLQBIEMO) able to induce magnetosome membrane biogenesis; coexpression of mamLQRBIEMO in a deletion of the 17 gene mamAB operon restores magnetosome vesicle formation but not magnetite biosynthesis. The chain is Magnetosome formation protease MamE from Magnetospirillum gryphiswaldense (strain DSM 6361 / JCM 21280 / NBRC 15271 / MSR-1).